A 456-amino-acid polypeptide reads, in one-letter code: Sulfate adenylyltransferase (456 aa).

This sequence belongs to the sulfate adenylyltransferase family.

The enzyme catalyses sulfate + ATP + H(+) = adenosine 5'-phosphosulfate + diphosphate. The protein operates within sulfur metabolism; hydrogen sulfide biosynthesis; sulfite from sulfate: step 1/3. In Archaeoglobus fulgidus (strain ATCC 49558 / DSM 4304 / JCM 9628 / NBRC 100126 / VC-16), this protein is Sulfate adenylyltransferase (sat).